The following is a 446-amino-acid chain: tRNA modification GTPase MnmE (446 aa).

Residues Arg24, Glu81, and Lys120 each contribute to the (6S)-5-formyl-5,6,7,8-tetrahydrofolate site. A TrmE-type G domain is found at 216–368; that stretch reads GLHAVLIGPP…LHIRLRELAL (153 aa). Asn226 serves as a coordination point for K(+). GTP is bound by residues 226–231, 245–251, and 270–273; these read NAGKSS, TDVAGTT, and DTAG. Ser230 is a binding site for Mg(2+). Positions 245, 247, and 250 each coordinate K(+). A Mg(2+)-binding site is contributed by Thr251. Lys446 is a (6S)-5-formyl-5,6,7,8-tetrahydrofolate binding site.

It belongs to the TRAFAC class TrmE-Era-EngA-EngB-Septin-like GTPase superfamily. TrmE GTPase family. As to quaternary structure, homodimer. Heterotetramer of two MnmE and two MnmG subunits. It depends on K(+) as a cofactor.

Its subcellular location is the cytoplasm. Its function is as follows. Exhibits a very high intrinsic GTPase hydrolysis rate. Involved in the addition of a carboxymethylaminomethyl (cmnm) group at the wobble position (U34) of certain tRNAs, forming tRNA-cmnm(5)s(2)U34. This chain is tRNA modification GTPase MnmE, found in Xanthomonas oryzae pv. oryzae (strain MAFF 311018).